The following is a 264-amino-acid chain: tRNA (guanine-N(1)-)-methyltransferase (264 aa).

Residues Gly125 and 145–150 (LGDFVL) contribute to the S-adenosyl-L-methionine site.

The protein belongs to the RNA methyltransferase TrmD family. In terms of assembly, homodimer.

It is found in the cytoplasm. The catalysed reaction is guanosine(37) in tRNA + S-adenosyl-L-methionine = N(1)-methylguanosine(37) in tRNA + S-adenosyl-L-homocysteine + H(+). In terms of biological role, specifically methylates guanosine-37 in various tRNAs. The polypeptide is tRNA (guanine-N(1)-)-methyltransferase (Burkholderia vietnamiensis (strain G4 / LMG 22486) (Burkholderia cepacia (strain R1808))).